A 548-amino-acid polypeptide reads, in one-letter code: MKKVTAMLFSMAVGLNAVSMAAKAKASEEQETDVLLIGGGIMSATLGTYLRELEPEWSMTMVERLEGVAQESSNGWNNAGTGHSALMELNYTPQNADGSISIEKAVAINEAFQISRQFWAHQVERGVLRTPRSFINTVPHMSFVWGEDNVNFLRARYAALQQSSLFRGMRYSEDHAQIKEWAPLVMEGRDPQQKVAATRTEIGTDVNYGEITRQLISSLQKKSNFSLQLSSEVRALKRNDDNTWTVTVADLKNGTAQNIRAKFVFIGAGGAALKLLQESGIPEAKDYAGFPVGGQFLVSENPDVVNHHLAKVYGKASVGAPPMSVPHIDTRVLDGKRVVLFGPFATFSTKFLKNGSLWDLMSSTTTSNVMPMMHVGLDNFDLVKYLVSQVMLSEEDRFEALKEYYPQAKKEDWRLWQAGQRVQIIKRDADKGGVLRLGTEVVSDQQGTIAALLGASPGASTAAPIMLNLLEKVFGDRVSSPQWQATLKAIVPSYGRKLNGDVAATERELQYTSEVLGLKYDRPQAADSTPKPQLKPQPVQKEVADIAL.

The segment at Y520–L548 is disordered. Residues P530–K541 are compositionally biased toward low complexity.

The protein belongs to the MQO family. Requires FAD as cofactor.

The enzyme catalyses (S)-malate + a quinone = a quinol + oxaloacetate. The protein operates within carbohydrate metabolism; tricarboxylic acid cycle; oxaloacetate from (S)-malate (quinone route): step 1/1. This is Probable malate:quinone oxidoreductase from Shigella dysenteriae serotype 1 (strain Sd197).